Consider the following 186-residue polypeptide: Thiol:disulfide interchange protein CycY (186 aa).

Residues 1-20 form the signal peptide; it reads MGRYTLALLPLIVFGGIAHG. The Thioredoxin domain occupies 47–182; the sequence is DAEPAAARRA…LVPAMEKALG (136 aa). Cys-80 and Cys-83 are joined by a disulfide.

Belongs to the thioredoxin family. DsbE subfamily.

The protein resides in the periplasm. In terms of biological role, required for disulfide bond formation in some periplasmic proteins. Also acts as a disulfide oxidoreductase in cytochromes c biogenesis. The cysteines of apocytochromes c must be in the reduced state for covalent linkage between the two moieties to occur. This Rhizobium leguminosarum bv. viciae protein is Thiol:disulfide interchange protein CycY (cycY).